A 92-amino-acid polypeptide reads, in one-letter code: Small ribosomal subunit protein bS18B (92 aa).

Belongs to the bacterial ribosomal protein bS18 family. In terms of assembly, part of the 30S ribosomal subunit. Forms a tight heterodimer with protein bS6.

Binds as a heterodimer with protein bS6 to the central domain of the 16S rRNA, where it helps stabilize the platform of the 30S subunit. The protein is Small ribosomal subunit protein bS18B of Cupriavidus pinatubonensis (strain JMP 134 / LMG 1197) (Cupriavidus necator (strain JMP 134)).